The primary structure comprises 1254 residues: Receptor tyrosine-protein kinase erbB-2 (1254 aa).

A signal peptide spans 1 to 22 (MELAAWCGWGLLLALLSPGASG). The Extracellular segment spans residues 23 to 652 (TQVCTGTDMK…PAEQRASPAT (630 aa)). Cysteine 26 and cysteine 53 are oxidised to a cystine. N-linked (GlcNAc...) asparagine glycosylation is found at asparagine 68, asparagine 125, and asparagine 187. Disulfide bonds link cysteine 162–cysteine 192, cysteine 195–cysteine 204, cysteine 199–cysteine 212, cysteine 236–cysteine 244, cysteine 240–cysteine 252, cysteine 255–cysteine 264, cysteine 268–cysteine 295, cysteine 299–cysteine 311, cysteine 315–cysteine 331, cysteine 334–cysteine 338, cysteine 342–cysteine 367, cysteine 475–cysteine 504, cysteine 511–cysteine 520, and cysteine 515–cysteine 528. N-linked (GlcNAc...) asparagine glycosylation is present at asparagine 259. An N-linked (GlcNAc...) asparagine glycan is attached at asparagine 530. 8 cysteine pairs are disulfide-bonded: cysteine 531–cysteine 540, cysteine 544–cysteine 560, cysteine 563–cysteine 576, cysteine 567–cysteine 584, cysteine 587–cysteine 596, cysteine 600–cysteine 623, cysteine 626–cysteine 634, and cysteine 630–cysteine 642. A glycan (N-linked (GlcNAc...) asparagine) is linked at asparagine 571. A glycan (N-linked (GlcNAc...) asparagine) is linked at asparagine 629. Residues 653 to 675 (SIIATVVGILLFLVIGVVVGILI) traverse the membrane as a helical segment. Residues 676-689 (KRRRQKIRKYTMRR) are required for interaction with KPNB1 and EEA1. The short motif at 676 to 689 (KRRRQKIRKYTMRR) is the Nuclear localization signal element. Residues 676–1254 (KRRRQKIRKY…PEYLGLDVPV (579 aa)) lie on the Cytoplasmic side of the membrane. Positions 720–987 (LRKVKVLGSG…RMARDPQRFV (268 aa)) constitute a Protein kinase domain. Residues 726–734 (LGSGAFGTV) and lysine 753 contribute to the ATP site. The Proton acceptor role is filled by aspartate 845. The residue at position 877 (tyrosine 877) is a Phosphotyrosine. Disordered stretches follow at residues 1029-1116 (GFFF…SEDP) and 1133-1179 (CSPQ…GKNG). Phosphoserine is present on residues serine 1054, serine 1078, serine 1083, and serine 1107. Tyrosine 1112 bears the Phosphotyrosine mark. At tyrosine 1139 the chain carries Phosphotyrosine; by autocatalysis. The span at 1146-1161 (RPQPPLTPEGPLPPVR) shows a compositional bias: pro residues. Threonine 1166 bears the Phosphothreonine mark. The interaction with PIK3C2B stretch occupies residues 1195 to 1197 (EYL). Residue tyrosine 1196 is modified to Phosphotyrosine. The tract at residues 1223–1254 (DQDPSERGSPPNTFEGTPTAENPEYLGLDVPV) is disordered. Over residues 1232–1242 (PPNTFEGTPTA) the composition is skewed to polar residues. Tyrosine 1247 is modified (phosphotyrosine; by autocatalysis).

It belongs to the protein kinase superfamily. Tyr protein kinase family. EGF receptor subfamily. In terms of assembly, homodimer. Heterodimer with EGFR, ERBB3 and ERBB4. Part of a complex with EGFR and either PIK3C2A or PIK3C2B. May interact with PIK3C2B when phosphorylated on Tyr-1196. Interacts with PRKCABP and PLXNB1. Interacts (when phosphorylated on Tyr-1247) with MEMO. Interacts with MUC1. Interacts (when phosphorylated on Tyr-1139) with GRB7 (via SH2 domain). Interacts (when phosphorylated on Tyr-1247) with ERBIN. Interacts with SRC, KPNB1, RANBP2, EEA1, CRM1, CLTC, PTK6, RPA194, MYOC and ACTB. Interacts (preferentially with the tyrosine phosphorylated form) with CPNE3; this interaction occurs at the cell membrane and is increased in a growth factor heregulin-dependent manner. Interacts with HSP90AA1 and HSP90AB1 in an ATP-dependent manner; the interaction suppresses ERBB2 kinase activity. Interacts with SORL1; this interaction regulates ERBB2 subcellular distribution by promoting its recycling after internalization from endosomes back to the plasma membrane, hence stimulates ERBB2-mediated signaling. Interacts with SH3BGRL. Interacts with ROR1. Post-translationally, autophosphorylated. Autophosphorylation occurs in trans, i.e. one subunit of the dimeric receptor phosphorylates tyrosine residues on the other subunit. Ligand-binding increases phosphorylation on tyrosine residues. Signaling via SEMA4C promotes phosphorylation at Tyr-1247. Dephosphorylated by PTPN12.

The protein localises to the cell membrane. Its subcellular location is the cell projection. It localises to the ruffle membrane. It is found in the early endosome. The protein resides in the cytoplasm. The protein localises to the perinuclear region. Its subcellular location is the nucleus. The enzyme catalyses L-tyrosyl-[protein] + ATP = O-phospho-L-tyrosyl-[protein] + ADP + H(+). Functionally, protein tyrosine kinase that is part of several cell surface receptor complexes, but that apparently needs a coreceptor for ligand binding. Essential component of a neuregulin-receptor complex, although neuregulins do not interact with it alone. GP30 is a potential ligand for this receptor. Regulates outgrowth and stabilization of peripheral microtubules (MTs). Upon ERBB2 activation, the MEMO1-RHOA-DIAPH1 signaling pathway elicits the phosphorylation and thus the inhibition of GSK3B at cell membrane. This prevents the phosphorylation of APC and CLASP2, allowing its association with the cell membrane. In turn, membrane-bound APC allows the localization of MACF1 to the cell membrane, which is required for microtubule capture and stabilization. Its function is as follows. In the nucleus is involved in transcriptional regulation. Associates with the 5'-TCAAATTC-3' sequence in the PTGS2/COX-2 promoter and activates its transcription. Implicated in transcriptional activation of CDKN1A; the function involves STAT3 and SRC. Involved in the transcription of rRNA genes by RNA Pol I and enhances protein synthesis and cell growth. This Mesocricetus auratus (Golden hamster) protein is Receptor tyrosine-protein kinase erbB-2 (ERBB2).